Consider the following 548-residue polypeptide: MDKFLTYFQVRGERANAVRLFGEISEQIDCSHLKRDCFVNGICARQHFKECCNIATDNGSRTNADKLVALALRALLDRQTIWTCVIKNADYVSQYADEQMEEEVNKLYDVYLQSGTREEFEGFRQRNRPSRVVMDDSCSMLSYFYIPMNQGNPAPVAKLSRWGQFGICYYDRTNVDGLIPYDEIGLAQAIDGLKDLIEGRLPVCPYTGANGRINAVLHLPLEMEVIMAVQENATQLMRRAAQDFKFITHAGWKLYPRLLRQRFAIEDATEGVIHHVMLGHLRYYDEDTSIVKYRFLNDGSLDWRTWTIPLHLMRTARLGHLQPESILVFMHKKLTCQVCFMVDLAMLDTIPVVDSKVAELTGGTDVFYTRAYVHADNHKVPNVRDLMMNEVFRKIDDHWVIQKCHTTKEAITVTAIQIQRSIRGDGQWDTPMFHQSMALLTRLIVYWLTDVTERSAIFRLTCFAIFGCKPTARGRYIDWDDLGTFLKNVLDGRDLTVLEDETCFISMMRMAMLHVQRSKAVCATVLEAPLEIQQVGQIVEVPFDFMHN.

The protein belongs to the orbivirus non-structural protein NS1 family.

This Camelus dromedarius (Dromedary) protein is Non-structural protein NS1 (Segment-5).